Reading from the N-terminus, the 383-residue chain is Glutaminyl-peptide cyclotransferase-like protein (383 aa).

A helical transmembrane segment spans residues 33–53; the sequence is VQFLPLLLLALAMGLAFYIVW. An intrachain disulfide couples C168 to C192. D187 contacts Zn(2+). E226 acts as the Proton acceptor in catalysis. E227 contacts Zn(2+). D270 (proton acceptor) is an active-site residue. Residue H352 participates in Zn(2+) binding.

This sequence belongs to the glutaminyl-peptide cyclotransferase family. As to expression, detected in thalamus, hippocampus, brain cortex, cerebellum, kidney, lung and liver, and at low levels in heart and spleen.

It is found in the golgi apparatus membrane. It catalyses the reaction N-terminal L-glutaminyl-[peptide] = N-terminal 5-oxo-L-prolyl-[peptide] + NH4(+). Responsible for the biosynthesis of pyroglutamyl peptides. The chain is Glutaminyl-peptide cyclotransferase-like protein (Qpctl) from Mus musculus (Mouse).